A 179-amino-acid polypeptide reads, in one-letter code: NAD(P)H-quinone oxidoreductase subunit I, chloroplastic (179 aa).

2 consecutive 4Fe-4S ferredoxin-type domains span residues 55 to 84 (GRIHFEFDKCIACEVCVRVCPIDLPVVDWR) and 95 to 124 (LNYSIDFGVCIFCGNCVEYCPTNCLSMTEE). [4Fe-4S] cluster is bound by residues Cys-64, Cys-67, Cys-70, Cys-74, Cys-104, Cys-107, Cys-110, and Cys-114.

It belongs to the complex I 23 kDa subunit family. As to quaternary structure, NDH is composed of at least 16 different subunits, 5 of which are encoded in the nucleus. Requires [4Fe-4S] cluster as cofactor.

The protein localises to the plastid. It localises to the chloroplast thylakoid membrane. The catalysed reaction is a plastoquinone + NADH + (n+1) H(+)(in) = a plastoquinol + NAD(+) + n H(+)(out). It carries out the reaction a plastoquinone + NADPH + (n+1) H(+)(in) = a plastoquinol + NADP(+) + n H(+)(out). Its function is as follows. NDH shuttles electrons from NAD(P)H:plastoquinone, via FMN and iron-sulfur (Fe-S) centers, to quinones in the photosynthetic chain and possibly in a chloroplast respiratory chain. The immediate electron acceptor for the enzyme in this species is believed to be plastoquinone. Couples the redox reaction to proton translocation, and thus conserves the redox energy in a proton gradient. The chain is NAD(P)H-quinone oxidoreductase subunit I, chloroplastic from Acorus calamus (Sweet flag).